A 238-amino-acid chain; its full sequence is MRKLFLSLLMIPFVAKANFMIYPISKEIKGGSSELIRIYSKSKDTQYIKVYTKKVLNPGTKEEYEVDTPNWEGGLVTTPSKVILPGGGSKSVRLSQLKDISSEDVYRVYFESIKPEKQDGLSKNKSLKTDLSVNIIYAALIRVLPKDGKSDMRASLSPKSSLLIKNTGNVRVGIKDAFFCKKTSINNDDCIKKTYNKNIYPGSSFDTGVIQNGFSHIFIDSVDGSAGKQGKRMLISIH.

The signal sequence occupies residues 1–17 (MRKLFLSLLMIPFVAKA).

It is found in the fimbrium. Might function as a shuttle protein in the transport of fimbria through the periplasmic space or might function as an adhesin. This is CS1 fimbrial subunit B (csoB) from Escherichia coli.